A 284-amino-acid polypeptide reads, in one-letter code: Pantothenate synthetase (284 aa).

30-37 (MGNLHDGH) contacts ATP. The active-site Proton donor is the His-37. Gln-61 is a (R)-pantoate binding site. Gln-61 contacts beta-alanine. Residue 149–152 (GEKD) coordinates ATP. Position 155 (Gln-155) interacts with (R)-pantoate. ATP is bound by residues Val-178 and 186–189 (LSSR).

It belongs to the pantothenate synthetase family. As to quaternary structure, homodimer.

Its subcellular location is the cytoplasm. It catalyses the reaction (R)-pantoate + beta-alanine + ATP = (R)-pantothenate + AMP + diphosphate + H(+). Its pathway is cofactor biosynthesis; (R)-pantothenate biosynthesis; (R)-pantothenate from (R)-pantoate and beta-alanine: step 1/1. In terms of biological role, catalyzes the condensation of pantoate with beta-alanine in an ATP-dependent reaction via a pantoyl-adenylate intermediate. The chain is Pantothenate synthetase from Erwinia tasmaniensis (strain DSM 17950 / CFBP 7177 / CIP 109463 / NCPPB 4357 / Et1/99).